A 1131-amino-acid polypeptide reads, in one-letter code: cGMP-specific 3',5'-cyclic phosphodiesterase (1131 aa).

Disordered regions lie at residues Met-1–Thr-26 and Gly-42–Asp-150. Over residues Gly-42–Gly-63 the composition is skewed to low complexity. A compositionally biased stretch (polar residues) spans Ser-75–Ser-86. Positions Ser-110–Gln-136 are enriched in low complexity. 2 consecutive GAF domains span residues Asp-255–Ile-412 and Asn-444–Ile-625. The PDEase domain occupies Ser-655–Val-978. The active-site Proton donor is His-731. 4 residues coordinate a divalent metal cation: His-735, His-771, Asp-772, and Asp-882. 2 disordered regions span residues Gln-1019 to Leu-1048 and Ser-1078 to Leu-1131. Basic and acidic residues-rich tracts occupy residues Gly-1024–Arg-1035 and Ser-1078–Ser-1088. The span at Ala-1097–Met-1117 shows a compositional bias: low complexity. The segment covering Ser-1121 to Leu-1131 has biased composition (basic residues). Residue Cys-1128 is modified to Cysteine methyl ester. Cys-1128 carries the S-farnesyl cysteine lipid modification. Residues Ala-1129–Leu-1131 constitute a propeptide, removed in mature form.

This sequence belongs to the cyclic nucleotide phosphodiesterase family. In terms of assembly, interacts with PrBP. A divalent metal cation is required as a cofactor.

Its subcellular location is the cell membrane. The catalysed reaction is 3',5'-cyclic GMP + H2O = GMP + H(+). Has a role regulating cGMP transport in Malpighian tubule principal cells. This chain is cGMP-specific 3',5'-cyclic phosphodiesterase, found in Drosophila erecta (Fruit fly).